A 532-amino-acid chain; its full sequence is 2,3-bisphosphoglycerate-independent phosphoglycerate mutase (532 aa).

Asp-15 and Ser-65 together coordinate Mn(2+). The Phosphoserine intermediate role is filled by Ser-65. Residues His-126, 156-157, Arg-188, Arg-194, 258-261, and Lys-331 each bind substrate; these read RD and RPDR. 5 residues coordinate Mn(2+): Asp-398, His-402, Asp-439, His-440, and His-457.

Belongs to the BPG-independent phosphoglycerate mutase family. As to quaternary structure, monomer. Mn(2+) is required as a cofactor.

It catalyses the reaction (2R)-2-phosphoglycerate = (2R)-3-phosphoglycerate. The protein operates within carbohydrate degradation; glycolysis; pyruvate from D-glyceraldehyde 3-phosphate: step 3/5. Functionally, catalyzes the interconversion of 2-phosphoglycerate and 3-phosphoglycerate. The polypeptide is 2,3-bisphosphoglycerate-independent phosphoglycerate mutase (Cyanothece sp. (strain PCC 7425 / ATCC 29141)).